We begin with the raw amino-acid sequence, 1091 residues long: TATA element modulatory factor (1091 aa).

Disordered stretches follow at residues 42-86 (IPYG…KPVR) and 100-280 (FLSP…DAKS). Residues 57 to 81 (WDTSTWGLNSTSSEPQSPPTASQAI) are compositionally biased toward polar residues. A phosphoserine mark is found at serine 73, serine 78, serine 112, and serine 136. Composition is skewed to low complexity over residues 111–122 (KSPVVSKPPSKS), 131–142 (SSLQESSSPGQS), and 194–211 (SENV…TTST). Serine 213 is subject to Phosphoserine. Positions 217–234 (ETKDMALEPKEQKHEDRQ) are enriched in basic and acidic residues. 2 stretches are compositionally biased toward low complexity: residues 242–253 (VSSFSSGTSTTS) and 264–273 (ISESSASSRQ). Phosphoserine occurs at positions 324, 326, 329, 334, 340, and 357. The tract at residues 329–338 (SLDSRSVSEI) is interaction with Elongin BC complex. The segment at 360-443 (TPKTKVVEST…NQPKAPPEKE (84 aa)) is disordered. Residues 368 to 379 (STEENAEEEEGN) show a composition bias toward acidic residues. Phosphoserine occurs at positions 411 and 540. Coiled-coil stretches lie at residues 443 to 767 (EDVC…STAR) and 824 to 894 (IQMS…SQLE). Phosphoserine is present on residues serine 923 and serine 926. Threonine 927 carries the phosphothreonine modification. Phosphoserine is present on serine 931. The stretch at 984 to 1090 (IENLQSQLKL…QIDELLRQRL (107 aa)) forms a coiled coil.

As to quaternary structure, component of the SNF/SWI transcription factor complexes. Interacts with RAB6A. Interacts with TCEB1. Interacts with STAT3 and FER. Interacts with TRNP1; may regulate TRNP1 proteasomal degradation. In terms of processing, phosphorylated by FER.

It is found in the cytoplasm. The protein resides in the nucleus. The protein localises to the golgi apparatus membrane. In terms of biological role, potential coactivator of the androgen receptor. May play critical roles in two RAB6-dependent retrograde transport processes: one from endosomes to the Golgi and the other from the Golgi to the ER. Mediates STAT3 degradation. The chain is TATA element modulatory factor (Tmf1) from Mus musculus (Mouse).